A 763-amino-acid chain; its full sequence is 5-methyltetrahydropteroyltriglutamate--homocysteine methyltransferase (763 aa).

Residues 16 to 19 (RELK) and K117 contribute to the 5-methyltetrahydropteroyltri-L-glutamate site. L-homocysteine-binding positions include 440–442 (IGS) and E493. L-methionine contacts are provided by residues 440–442 (IGS) and E493. 5-methyltetrahydropteroyltri-L-glutamate is bound by residues 524-525 (RC) and W570. Residue D608 coordinates L-homocysteine. D608 is an L-methionine binding site. 5-methyltetrahydropteroyltri-L-glutamate is bound at residue E614. Positions 650, 652, and 674 each coordinate Zn(2+). H703 acts as the Proton donor in catalysis. A Zn(2+)-binding site is contributed by C735.

The protein belongs to the vitamin-B12 independent methionine synthase family. Requires Zn(2+) as cofactor.

The enzyme catalyses 5-methyltetrahydropteroyltri-L-glutamate + L-homocysteine = tetrahydropteroyltri-L-glutamate + L-methionine. It participates in amino-acid biosynthesis; L-methionine biosynthesis via de novo pathway; L-methionine from L-homocysteine (MetE route): step 1/1. Functionally, catalyzes the transfer of a methyl group from 5-methyltetrahydrofolate to homocysteine resulting in methionine formation. The polypeptide is 5-methyltetrahydropteroyltriglutamate--homocysteine methyltransferase (Alcanivorax borkumensis (strain ATCC 700651 / DSM 11573 / NCIMB 13689 / SK2)).